The primary structure comprises 631 residues: 30-kDa cleavage and polyadenylation specificity factor 30 (631 aa).

The interval 12-38 (EGGLDSGPVQNTASVPVAPPENSSSAA) is disordered. C3H1-type zinc fingers lie at residues 60-87 (SFRQ…HQFD), 88-112 (KARM…VYKH), and 114-141 (NEDI…HAKL). The disordered stretch occupies residues 179 to 234 (QDRPQGQVPMQGQPQESGNLQQQQQQQPQQSQHQVSQTLIPNPADQTNRTSHPLPQ). The segment covering 182–215 (PQGQVPMQGQPQESGNLQQQQQQQPQQSQHQVSQ) has biased composition (low complexity). The segment covering 216–231 (TLIPNPADQTNRTSHP) has biased composition (polar residues). Positions 237–372 (NRYFVVKSNN…SVGEQLASLL (136 aa)) constitute a YTH domain. Residues 392-407 (EEEKAKGVNPESRAEN) are compositionally biased toward basic and acidic residues. Disordered regions lie at residues 392-447 (EEEK…RGIM) and 541-631 (PHMG…KKRR). The segment covering 412–432 (PFEDNEEEEEEEDESEEEEES) has biased composition (acidic residues). Residues 573–583 (KTPERSDERGV) show a composition bias toward basic and acidic residues. 2 positions are modified to phosphoserine: Ser610 and Ser612. A compositionally biased stretch (basic residues) spans 621-631 (RSRHGEGKKRR).

Belongs to the CPSF4/YTH1 family. Component of the cleavage and polyadenylation specificity factor (CPSF) complex. Can form homodimers. Binds to calmodulin. Forms a complex with cleavage and polyadenylation specificity factor (CPSF) subunits CPSF73-I, CPSF73-II, CPSF100, CPSF160, CFIS2, FIPS3, FIPS5, PAPS2, PAPS3, CLPS3, PCFS1, PCFS4, CSTF50 and CSTF77. As to expression, expressed in seedlings, roots, leaves, siliques, stems and flowers.

The protein localises to the nucleus. The protein resides in the cytoplasm. Its activity is regulated as follows. Endonuclease activity is repressed by the N-terminal domain of FIPS5. Nuclease activity is inhibited by zinc (&gt;100 uM), cadmium in a progressive manner (50 percent activity at 1 mM Cd(2+)), and high salt levels (e.g. KCl or NaCl &gt;600 mM). Stimulated by ATP in the presence of Zn(2+), even at inhibitory zinc concentrations. Elevated temperatures prevent RNA-binding at 55 degrees Celsius, but endonuclease activity at 70 degrees Celsius. The sulfhydryl reagent dithiothreitol (DTT) inhibits both RNA-binding and nuclease activities. Its function is as follows. Component of the cleavage and polyadenylation specificity factor (CPSF) complex that play a key role in pre-mRNA 3'-end formation. May interact with poly(A) polymerase and other factors to bring about cleavage and poly(A) addition. Mediates poly(A) site selection. Binds RNA in a calcium-dependent manner. Exhibits endonuclease activity with an ability to nick and degrade linear as well as circular single-stranded RNA that leaves RNA 3' ends with hydroxyl groups, thus mediating processing of the pre-mRNA as a prelude to the polyadenylation. Involved in the post-transcriptional control, probably via poly(A) addition, of the responses of plants to stress, especially genes mediating tolerance to oxidative stress. Plays a role in the regulation of salicylic acid (SA) production via the control of messenger RNA 3' end processing, thus being a key component of programmed cell death and plant immune responses required for resistance to virulent Pseudomonas syringae pv tomato DC3000 (Pst). The protein is 30-kDa cleavage and polyadenylation specificity factor 30 of Arabidopsis thaliana (Mouse-ear cress).